The following is a 259-amino-acid chain: UPF0246 protein NGO_0461 (259 aa).

It belongs to the UPF0246 family.

The protein is UPF0246 protein NGO_0461 of Neisseria gonorrhoeae (strain ATCC 700825 / FA 1090).